The chain runs to 313 residues: Competence protein ComGA (313 aa).

Glycine 138–threonine 145 contacts ATP.

It belongs to the GSP E family.

It localises to the cell membrane. In terms of biological role, required for uptake of DNA by competent cells. May be involved in assembly of a complex forming a transformation pilus at the surface of competent cells. This is Competence protein ComGA from Streptococcus pneumoniae (strain ATCC BAA-255 / R6).